The chain runs to 391 residues: 3-ketoacyl-CoA thiolase (391 aa).

Catalysis depends on cysteine 95, which acts as the Acyl-thioester intermediate. Active-site proton acceptor residues include histidine 347 and cysteine 377.

The protein belongs to the thiolase-like superfamily. Thiolase family. In terms of assembly, heterotetramer of two alpha chains (FadB) and two beta chains (FadA).

The protein resides in the cytoplasm. It carries out the reaction an acyl-CoA + acetyl-CoA = a 3-oxoacyl-CoA + CoA. It functions in the pathway lipid metabolism; fatty acid beta-oxidation. Its function is as follows. Catalyzes the final step of fatty acid oxidation in which acetyl-CoA is released and the CoA ester of a fatty acid two carbons shorter is formed. The chain is 3-ketoacyl-CoA thiolase from Ectopseudomonas mendocina (strain ymp) (Pseudomonas mendocina).